The following is a 188-amino-acid chain: Preprocaerulein type-1 (188 aa).

The N-terminal stretch at M1 to A26 is a signal peptide. Positions D27–G170 are excised as a propeptide. Positions L152 to D188 are disordered. Y174 is subject to Sulfotyrosine. F180 is subject to Phenylalanine amide. The propeptide occupies N184–D188.

The protein belongs to the gastrin/cholecystokinin family. Expressed by the skin glands.

The protein localises to the secreted. In terms of biological role, the pharmacological activities of caerulein are quite similar to the physiological activities of gastrin and related peptides. This is Preprocaerulein type-1 from Xenopus laevis (African clawed frog).